The sequence spans 685 residues: Protein arginine N-methyltransferase 7 (685 aa).

2 consecutive SAM-dependent MTase PRMT-type domains span residues 14–355 (QATW…YSLW) and 364–685 (AESI…LKSI).

The protein belongs to the class I-like SAM-binding methyltransferase superfamily. Protein arginine N-methyltransferase family. PRMT7 subfamily.

Functionally, essential arginine methyltransferase that can both catalyze the formation of omega-N monomethylarginine (MMA) and symmetrical dimethylarginine (sDMA). Specifically mediates the symmetrical dimethylation of arginine residues in the small nuclear ribonucleoproteins SmD1 and SmD3. This chain is Protein arginine N-methyltransferase 7 (Art7), found in Drosophila willistoni (Fruit fly).